The chain runs to 557 residues: uncharacterized protein (557 aa).

Positions 17-38 (NSAEFSIHSTSNPTNPEEPNIT) are disordered. 9 consecutive transmembrane segments (helical) span residues 60–80 (LSLF…PSVA), 94–114 (GLLW…LSMA), 214–234 (SVGT…ILAM), 261–281 (FAIL…DAPF), 297–317 (GIIL…IVIA), 348–368 (LGIL…NLIA), 407–427 (VIGV…GAVF), 468–488 (IGFC…FPSV), and 498–518 (WTCL…AISG).

This sequence belongs to the amino acid-polyamine-organocation (APC) superfamily.

It localises to the membrane. This is an uncharacterized protein from Schizosaccharomyces pombe (strain 972 / ATCC 24843) (Fission yeast).